The chain runs to 1405 residues: DNA-directed RNA polymerase subunit beta' (1405 aa).

Residues cysteine 70, cysteine 72, cysteine 85, and cysteine 88 each contribute to the Zn(2+) site. Mg(2+)-binding residues include aspartate 460, aspartate 462, and aspartate 464. Residues cysteine 814, cysteine 888, cysteine 895, and cysteine 898 each coordinate Zn(2+).

It belongs to the RNA polymerase beta' chain family. In terms of assembly, the RNAP catalytic core consists of 2 alpha, 1 beta, 1 beta' and 1 omega subunit. When a sigma factor is associated with the core the holoenzyme is formed, which can initiate transcription. Mg(2+) is required as a cofactor. The cofactor is Zn(2+).

The catalysed reaction is RNA(n) + a ribonucleoside 5'-triphosphate = RNA(n+1) + diphosphate. In terms of biological role, DNA-dependent RNA polymerase catalyzes the transcription of DNA into RNA using the four ribonucleoside triphosphates as substrates. This is DNA-directed RNA polymerase subunit beta' from Shewanella oneidensis (strain ATCC 700550 / JCM 31522 / CIP 106686 / LMG 19005 / NCIMB 14063 / MR-1).